We begin with the raw amino-acid sequence, 175 residues long: Adenylate kinase isoenzyme 6 homolog (175 aa).

ATP contacts are provided by Gly-17, Gly-19, Lys-20, Thr-21, and Ser-22. The segment at 37-60 (DISSAVKEKELHDGWDSEFQCYIL) is NMPbind. Residues 112–122 (KRNYNQHKITN) are LID. ATP is bound at residue Arg-113.

It belongs to the adenylate kinase family. AK6 subfamily. Monomer and homodimer. Interacts with small ribosomal subunit protein uS11. Not a structural component of 43S pre-ribosomes, but transiently interacts with them by binding to uS11.

The protein resides in the cytoplasm. It is found in the nucleus. The catalysed reaction is AMP + ATP = 2 ADP. The enzyme catalyses ATP + H2O = ADP + phosphate + H(+). Broad-specificity nucleoside monophosphate (NMP) kinase that catalyzes the reversible transfer of the terminal phosphate group between nucleoside triphosphates and monophosphates. Also has ATPase activity. Involved in the late cytoplasmic maturation steps of the 40S ribosomal particles, specifically 18S rRNA maturation. While NMP activity is not required for ribosome maturation, ATPase activity is. Associates transiently with small ribosomal subunit protein uS11. ATP hydrolysis breaks the interaction with uS11. May temporarily remove uS11 from the ribosome to enable a conformational change of the ribosomal RNA that is needed for the final maturation step of the small ribosomal subunit. Its NMP activity may have a role in nuclear energy homeostasis. In Dictyostelium discoideum (Social amoeba), this protein is Adenylate kinase isoenzyme 6 homolog.